Here is a 590-residue protein sequence, read N- to C-terminus: UvrABC system protein C (590 aa).

The region spanning 11–85 is the GIY-YIG domain; the sequence is ETPGVYLWKR…IKAHRPLYNV (75 aa). The 36-residue stretch at 194-229 folds into the UVR domain; it reads DGLLQELEAKMREAARRLEFERAAEIRDQMEALRAF.

Belongs to the UvrC family. As to quaternary structure, interacts with UvrB in an incision complex.

It is found in the cytoplasm. Functionally, the UvrABC repair system catalyzes the recognition and processing of DNA lesions. UvrC both incises the 5' and 3' sides of the lesion. The N-terminal half is responsible for the 3' incision and the C-terminal half is responsible for the 5' incision. This is UvrABC system protein C from Thermus thermophilus (strain ATCC 27634 / DSM 579 / HB8).